The primary structure comprises 331 residues: Laforin (331 aa).

Residues 1–124 form the CBM20 domain; sequence MRFRFGVVVP…NNLVDGVYCL (124 aa). Serine 25 carries the post-translational modification Phosphoserine; by AMPK. Residues tryptophan 32, lysine 87, 103–107, aspartate 197, aspartate 235, and arginine 241 contribute to the substrate site; that span reads GPHHD. Positions 156-323 constitute a Tyrosine-protein phosphatase domain; that stretch reads HYSRILPNIW…QEDFFQKFGK (168 aa). Catalysis depends on cysteine 266, which acts as the Phosphocysteine intermediate. Residues 266-272 carry the Glucan phosphatase signature motif CXAGXGR motif; it reads CNAGVGR. Substrate-binding positions include 267–272 and tyrosine 304; that span reads NAGVGR.

This sequence belongs to the protein-tyrosine phosphatase family. Homodimer. Interacts with itself. Interacts with PPP1R3B, PPP1R3C, PPP1R3D, HIRIP5, and EPM2AIP1. Binds glycogen and Lafora bodies. Interacts with NHLRC1/malin (via the NHL repeats). Forms a complex with NHLRC1/malin and HSP70. Interacts with PPP1R3D; in the presence of NHLC1/malin the interaction leads to ubiquitination and autophagic degradation of PPP1R3D. Interacts (via the phosphatase domain) with MAPT/Tau; the interaction dephosphorylates MAPT. Isoform 1 and isoform 2 interact to form a heterodimeric complex that lacks phosphatase activity (in vitro). Active phosphatase isoform 7 and isoform 1 interact with each other, but give rise to lower phosphatase activity than isoform 1 or isoform 7 by themselves (in vitro). Active phosphatase isoform 7 and inactive isoform 2 interact with each other, but give rise to lower phosphatase activity than isoform 7 by itself (in vitro). Interacts with PRDM8. Polyubiquitinated by NHLRC1/malin. Post-translationally, phosphorylation on Ser-25 by AMPK affects the phosphatase activity of the enzyme and its ability to homodimerize and interact with NHLRC1, PPP1R3C or PRKAA2. As to expression, expressed in heart, skeletal muscle, kidney, pancreas and brain. Isoform 4 is also expressed in the placenta.

The protein resides in the cytoplasm. The protein localises to the endoplasmic reticulum membrane. It is found in the cell membrane. It localises to the nucleus. It catalyses the reaction O-phospho-L-tyrosyl-[protein] + H2O = L-tyrosyl-[protein] + phosphate. It carries out the reaction O-phospho-L-seryl-[protein] + H2O = L-seryl-[protein] + phosphate. The enzyme catalyses O-phospho-L-threonyl-[protein] + H2O = L-threonyl-[protein] + phosphate. Its function is as follows. Plays an important role in preventing glycogen hyperphosphorylation and the formation of insoluble aggregates, via its activity as glycogen phosphatase, and by promoting the ubiquitination of proteins involved in glycogen metabolism via its interaction with the E3 ubiquitin ligase NHLRC1/malin. Shows strong phosphatase activity towards complex carbohydrates in vitro, avoiding glycogen hyperphosphorylation which is associated with reduced branching and formation of insoluble aggregates. Dephosphorylates phosphotyrosine and synthetic substrates, such as para-nitrophenylphosphate (pNPP), and has low activity with phosphoserine and phosphothreonine substrates (in vitro). Has been shown to dephosphorylate MAPT. Forms a complex with NHLRC1/malin and HSP70, which suppresses the cellular toxicity of misfolded proteins by promoting their degradation through the ubiquitin-proteasome system (UPS). Acts as a scaffold protein to facilitate PPP1R3C/PTG ubiquitination by NHLRC1/malin. Also promotes proteasome-independent protein degradation through the macroautophagy pathway. Functionally, does not bind to glycogen. Lacks phosphatase activity and might function as a dominant-negative regulator for the phosphatase activity of isoform 1 and isoform 7. In terms of biological role, has phosphatase activity (in vitro). The sequence is that of Laforin (EPM2A) from Homo sapiens (Human).